Reading from the N-terminus, the 413-residue chain is tRNA (guanine-N(7)-)-methyltransferase non-catalytic subunit WDR4 (413 aa).

An N-acetylalanine modification is found at alanine 2. WD repeat units lie at residues 61-100 (TGSD…CLSV), 102-141 (MVVR…GCGR), 145-185 (GHLS…IESF), 188-228 (GHTE…QLQC), and 289-329 (TFPH…WQAA). Residues 380–413 (RLQQQLKKKRQRSPFPGSPEQTKKACPGQSALSC) are disordered. 2 positions are modified to phosphoserine: serine 392 and serine 412.

The protein belongs to the WD repeat TRM82 family. In terms of assembly, non-catalytic component of the METTL1-WDR4 complex, composed of METTL1 and WDR4. Interacts with FEN1; the interaction is direct.

Its subcellular location is the nucleus. It is found in the chromosome. It functions in the pathway tRNA modification; N(7)-methylguanine-tRNA biosynthesis. In terms of biological role, non-catalytic component of the METTL1-WDR4 methyltransferase complex required for the formation of N(7)-methylguanine in a subset of RNA species, such as tRNAs, mRNAs and microRNAs (miRNAs). In the METTL1-WDR4 methyltransferase complex, WDR4 acts as a scaffold for tRNA-binding. Required for the formation of N(7)-methylguanine at position 46 (m7G46) in a large subset of tRNAs that contain the 5'-RAGGU-3' motif within the variable loop. M7G46 interacts with C13-G22 in the D-loop to stabilize tRNA tertiary structure and protect tRNAs from decay. Also required for the formation of N(7)-methylguanine at internal sites in a subset of mRNAs. Also required for methylation of a specific subset of miRNAs, such as let-7. Acts as a regulator of embryonic stem cell self-renewal and differentiation. Independently of METTL1, also plays a role in genome stability: localizes at the DNA replication site and regulates endonucleolytic activities of FEN1. This chain is tRNA (guanine-N(7)-)-methyltransferase non-catalytic subunit WDR4, found in Mus musculus (Mouse).